A 483-amino-acid chain; its full sequence is Glycogen synthase (483 aa).

Lys15 contacts ADP-alpha-D-glucose.

This sequence belongs to the glycosyltransferase 1 family. Bacterial/plant glycogen synthase subfamily.

The catalysed reaction is [(1-&gt;4)-alpha-D-glucosyl](n) + ADP-alpha-D-glucose = [(1-&gt;4)-alpha-D-glucosyl](n+1) + ADP + H(+). Its pathway is glycan biosynthesis; glycogen biosynthesis. Functionally, synthesizes alpha-1,4-glucan chains using ADP-glucose. This chain is Glycogen synthase, found in Exiguobacterium sibiricum (strain DSM 17290 / CCUG 55495 / CIP 109462 / JCM 13490 / 255-15).